The sequence spans 807 residues: Glycerol-3-phosphate acyltransferase (807 aa).

The HXXXXD motif signature appears at 305–310 (CHRSHM).

This sequence belongs to the GPAT/DAPAT family.

The protein localises to the cell inner membrane. The catalysed reaction is sn-glycerol 3-phosphate + an acyl-CoA = a 1-acyl-sn-glycero-3-phosphate + CoA. It functions in the pathway phospholipid metabolism; CDP-diacylglycerol biosynthesis; CDP-diacylglycerol from sn-glycerol 3-phosphate: step 1/3. The chain is Glycerol-3-phosphate acyltransferase from Aliivibrio fischeri (strain MJ11) (Vibrio fischeri).